We begin with the raw amino-acid sequence, 421 residues long: EGFR adapter protein (421 aa).

4 disordered regions span residues 18–94, 109–154, 173–194, and 372–396; these read TFIS…PQLQ, DVQE…RLVD, EDSR…SGCG, and PVPL…AGGT. The segment covering 21 to 30 has biased composition (low complexity); the sequence is SSSSASSSSS. Basic residues predominate over residues 62–89; that stretch reads FFHHHHPPAHPHPPRQQPHPHSHSHPHP. The segment covering 109–120 has biased composition (basic and acidic residues); that stretch reads DVQELSGQEHPH. Over residues 181 to 194 the composition is skewed to low complexity; sequence STCGSSLTSGSGCG. An SH2 domain is found at 286 to 379; sequence WFQAGIPREI…LLPVPLTLPR (94 aa).

May interact (via SH2 domain) with Egfr (when phosphorylated). As to expression, detected along the wing margin, with high levels of expression in two stripes of cells on either side of the dorsal/ventral boundary and lower levels of expression in a small region at the anteroposterior boundary (at protein level). High levels of expression along two parallel stripes of cells on either side of the wing pouch dorsal/ventral boundary, and slightly lower levels of expression in a region either side of the anteroposterior boundary. Also expressed in discrete regions of the wing imaginal disk outside of the pouch. Expressed in eye imaginal disk photoreceptors with highest levels of expression in R7 photoreceptor cells.

Involved in the negative regulation of the Egfr/Ras signaling pathway. During wing morphogenesis, may function redundantly with PVRAP to inhibit Egfr activity and prevent uncontrolled cell growth. The chain is EGFR adapter protein from Drosophila melanogaster (Fruit fly).